The sequence spans 361 residues: Probable galacturonosyltransferase-like 5 (361 aa).

Over 1 to 6 (MHWITR) the chain is Cytoplasmic. A helical; Signal-anchor for type II membrane protein membrane pass occupies residues 7–27 (FSAFFSAALAMILLSPSLQSF). Residues 28–361 (SPAAAIRSSH…APYDLYKHSH (334 aa)) are Lumenal-facing. N-linked (GlcNAc...) asparagine glycans are attached at residues Asn-218 and Asn-234.

This sequence belongs to the glycosyltransferase 8 family.

The protein localises to the golgi apparatus membrane. The protein operates within glycan metabolism; pectin biosynthesis. Its function is as follows. May be involved in pectin and/or xylans biosynthesis in cell walls. This chain is Probable galacturonosyltransferase-like 5 (GATL5), found in Arabidopsis thaliana (Mouse-ear cress).